A 592-amino-acid polypeptide reads, in one-letter code: UvrABC system protein C (592 aa).

The region spanning 15 to 92 is the GIY-YIG domain; that stretch reads ALPGCYLMKD…IQKHQPYFNI (78 aa). Positions 197 to 232 constitute a UVR domain; sequence DNVKKDLTEKMATAAQEMQFERAAELRDQLRYIEAT.

The protein belongs to the UvrC family. Interacts with UvrB in an incision complex.

It is found in the cytoplasm. Its function is as follows. The UvrABC repair system catalyzes the recognition and processing of DNA lesions. UvrC both incises the 5' and 3' sides of the lesion. The N-terminal half is responsible for the 3' incision and the C-terminal half is responsible for the 5' incision. The sequence is that of UvrABC system protein C from Latilactobacillus sakei subsp. sakei (strain 23K) (Lactobacillus sakei subsp. sakei).